A 157-amino-acid polypeptide reads, in one-letter code: Iron-sulfur cluster repair protein DnrN (157 aa).

This sequence belongs to the RIC family.

The protein resides in the cytoplasm. Functionally, di-iron-containing protein involved in the repair of iron-sulfur clusters damaged by oxidative and nitrosative stress conditions. Required to repair damage caused by nitric oxide to FNR and NsrR transcription factors. The polypeptide is Iron-sulfur cluster repair protein DnrN (dnrN) (Neisseria gonorrhoeae).